The chain runs to 235 residues: Purine nucleoside phosphorylase DeoD-type (235 aa).

Position 4 (His-4) interacts with a purine D-ribonucleoside. Phosphate contacts are provided by residues Gly-20, Arg-24, Arg-43, and 87 to 90 (RVGT). A purine D-ribonucleoside is bound by residues 179 to 181 (EME) and 203 to 204 (SN).

This sequence belongs to the PNP/UDP phosphorylase family. Homohexamer; trimer of homodimers.

It carries out the reaction a purine D-ribonucleoside + phosphate = a purine nucleobase + alpha-D-ribose 1-phosphate. The enzyme catalyses a purine 2'-deoxy-D-ribonucleoside + phosphate = a purine nucleobase + 2-deoxy-alpha-D-ribose 1-phosphate. Functionally, catalyzes the reversible phosphorolytic breakdown of the N-glycosidic bond in the beta-(deoxy)ribonucleoside molecules, with the formation of the corresponding free purine bases and pentose-1-phosphate. This chain is Purine nucleoside phosphorylase DeoD-type, found in Levilactobacillus brevis (strain ATCC 367 / BCRC 12310 / CIP 105137 / JCM 1170 / LMG 11437 / NCIMB 947 / NCTC 947) (Lactobacillus brevis).